The primary structure comprises 459 residues: V-type ATP synthase beta chain (459 aa).

The protein belongs to the ATPase alpha/beta chains family.

Its function is as follows. Produces ATP from ADP in the presence of a proton gradient across the membrane. The V-type beta chain is a regulatory subunit. This chain is V-type ATP synthase beta chain, found in Clostridium botulinum (strain Alaska E43 / Type E3).